Reading from the N-terminus, the 376-residue chain is Na(+)/H(+) antiporter NhaA (376 aa).

Helical transmembrane passes span 8 to 28 (FLAT…AAML), 49 to 69 (LSLL…LVGL), 87 to 107 (ILPC…YLAF), 117 to 137 (GWAI…ALLG), 140 to 160 (APAS…MGAV), 162 to 182 (IIAL…AIVI), 209 to 229 (LAVL…ALAI), 248 to 268 (PWVA…VSFA), 270 to 290 (IGAE…LFLG), 321 to 341 (GVAL…GLAF), and 349 to 369 (EVKI…YALL).

Belongs to the NhaA Na(+)/H(+) (TC 2.A.33) antiporter family.

Its subcellular location is the cell inner membrane. It carries out the reaction Na(+)(in) + 2 H(+)(out) = Na(+)(out) + 2 H(+)(in). In terms of biological role, na(+)/H(+) antiporter that extrudes sodium in exchange for external protons. This Rhizorhabdus wittichii (strain DSM 6014 / CCUG 31198 / JCM 15750 / NBRC 105917 / EY 4224 / RW1) (Sphingomonas wittichii) protein is Na(+)/H(+) antiporter NhaA.